Reading from the N-terminus, the 273-residue chain is Non-homologous end joining protein Ku (273 aa).

The Ku domain occupies 13–190 (KLSLVTCPVA…FTGIEKKSDA (178 aa)). The disordered stretch occupies residues 227-251 (KKKAKKPSKAKASKSTKGDDEEKSN). Positions 228–240 (KKAKKPSKAKASK) are enriched in basic residues.

Belongs to the prokaryotic Ku family. As to quaternary structure, homodimer. Interacts with LigD.

In terms of biological role, with LigD forms a non-homologous end joining (NHEJ) DNA repair enzyme, which repairs dsDNA breaks with reduced fidelity. Binds linear dsDNA with 5'- and 3'- overhangs but not closed circular dsDNA nor ssDNA. Recruits and stimulates the ligase activity of LigD. The protein is Non-homologous end joining protein Ku of Allorhizobium ampelinum (strain ATCC BAA-846 / DSM 112012 / S4) (Agrobacterium vitis (strain S4)).